Here is a 491-residue protein sequence, read N- to C-terminus: Probable glycine dehydrogenase (decarboxylating) subunit 2 (491 aa).

Lysine 274 is modified (N6-(pyridoxal phosphate)lysine).

This sequence belongs to the GcvP family. C-terminal subunit subfamily. As to quaternary structure, the glycine cleavage system is composed of four proteins: P, T, L and H. In this organism, the P 'protein' is a heterodimer of two subunits. Pyridoxal 5'-phosphate is required as a cofactor.

It carries out the reaction N(6)-[(R)-lipoyl]-L-lysyl-[glycine-cleavage complex H protein] + glycine + H(+) = N(6)-[(R)-S(8)-aminomethyldihydrolipoyl]-L-lysyl-[glycine-cleavage complex H protein] + CO2. The glycine cleavage system catalyzes the degradation of glycine. The P protein binds the alpha-amino group of glycine through its pyridoxal phosphate cofactor; CO(2) is released and the remaining methylamine moiety is then transferred to the lipoamide cofactor of the H protein. This is Probable glycine dehydrogenase (decarboxylating) subunit 2 from Shouchella clausii (strain KSM-K16) (Alkalihalobacillus clausii).